The sequence spans 548 residues: Chaperonin GroEL (548 aa).

ATP-binding positions include 29-32, lysine 50, 86-90, glycine 414, 478-480, and aspartate 494; these read TMGP, DGTTT, and NAA.

Belongs to the chaperonin (HSP60) family. Forms a cylinder of 14 subunits composed of two heptameric rings stacked back-to-back. Interacts with the co-chaperonin GroES.

It is found in the cytoplasm. The enzyme catalyses ATP + H2O + a folded polypeptide = ADP + phosphate + an unfolded polypeptide.. Functionally, together with its co-chaperonin GroES, plays an essential role in assisting protein folding. The GroEL-GroES system forms a nano-cage that allows encapsulation of the non-native substrate proteins and provides a physical environment optimized to promote and accelerate protein folding. In terms of biological role, may play a protective role against the defense mechanisms generated by the infected macrophages. The protein is Chaperonin GroEL of Legionella pneumophila.